A 326-amino-acid polypeptide reads, in one-letter code: Target of rapamycin complex subunit lst8 (326 aa).

7 WD repeats span residues 1–37, 40–80, 83–122, 126–165, 168–207, 218–257, and 268–309; these read MNVN…CTRT, HQDS…PVIN, GVSK…LQCQ, QVNA…NEQL, EPDV…GDEV, AHKR…LMTE, and TSRG…REYS.

The protein belongs to the WD repeat LST8 family. In terms of assembly, part of the mechanistic target of rapamycin complex 1 (mTORC1) which contains MTOR, MLST8 and RPTOR. Component of the mechanistic target of rapamycin complex 2 (mTORC2), consisting in two heterotretramers composed of MTOR, MLST8, RICTOR and MAPKAP1/SIN1.

It is found in the lysosome membrane. Its subcellular location is the cytoplasm. Functionally, subunit of both mTORC1 and mTORC2, which regulates cell growth and survival in response to nutrient and hormonal signals. mTORC1 is activated in response to growth factors or amino acids. In response to nutrients, mTORC1 is recruited to the lysosome membrane and promotes protein, lipid and nucleotide synthesis by phosphorylating several substrates, such as ribosomal protein S6 kinase (RPS6KB1 and RPS6KB2) and EIF4EBP1 (4E-BP1). In the same time, it inhibits catabolic pathways by phosphorylating the autophagy initiation components ULK1 and ATG13, as well as transcription factor TFEB, a master regulators of lysosomal biogenesis and autophagy. The mTORC1 complex is inhibited in response to starvation and amino acid depletion. Within mTORC1, MLST8 interacts directly with MTOR and enhances its kinase activity. In nutrient-poor conditions, stabilizes the MTOR-RPTOR interaction and favors RPTOR-mediated inhibition of MTOR activity. As part of the mTORC2 complex, transduces signals from growth factors to pathways involved in proliferation, cytoskeletal organization, lipogenesis and anabolic output. mTORC2 is also activated by growth factors, but seems to be nutrient-insensitive. In response to growth factors, mTORC2 phosphorylates and activates AGC protein kinase family members, including AKT (AKT1, AKT2 and AKT3), PKC (PRKCA, PRKCB and PRKCE) and SGK1. mTORC2 functions upstream of Rho GTPases to regulate the actin cytoskeleton, probably by activating one or more Rho-type guanine nucleotide exchange factors. mTORC2 promotes the serum-induced formation of stress-fibers or F-actin. Within mTORC2, MLST8 acts as a bridge between MAPKAP1/SIN1 and MTOR. The polypeptide is Target of rapamycin complex subunit lst8 (mlst8) (Danio rerio (Zebrafish)).